The following is a 276-amino-acid chain: TCP pilus virulence regulatory protein (276 aa).

Positions 172–269 constitute an HTH araC/xylS-type domain; sequence EKISCLVKSD…NVAPSEYLFM (98 aa). 2 consecutive DNA-binding regions (H-T-H motif) follow at residues 189–210 and 236–259; these read ADIC…ESRG and IKQI…KSTM.

It localises to the cytoplasm. Its function is as follows. Probable regulatory protein for the tcp operon. The protein is TCP pilus virulence regulatory protein (tcpN) of Vibrio cholerae serotype O1 (strain ATCC 39541 / Classical Ogawa 395 / O395).